The chain runs to 402 residues: Imidazolonepropionase (402 aa).

H66 and H68 together coordinate Fe(3+). Residues H66 and H68 each contribute to the Zn(2+) site. 4-imidazolone-5-propanoate contacts are provided by R75, Y138, and H171. Y138 contributes to the N-formimidoyl-L-glutamate binding site. H236 contacts Fe(3+). H236 is a Zn(2+) binding site. Q239 contributes to the 4-imidazolone-5-propanoate binding site. D311 is a binding site for Fe(3+). D311 provides a ligand contact to Zn(2+). Residues N313 and G315 each coordinate N-formimidoyl-L-glutamate. A 4-imidazolone-5-propanoate-binding site is contributed by T316.

This sequence belongs to the metallo-dependent hydrolases superfamily. HutI family. The cofactor is Zn(2+). It depends on Fe(3+) as a cofactor.

Its subcellular location is the cytoplasm. The enzyme catalyses 4-imidazolone-5-propanoate + H2O = N-formimidoyl-L-glutamate. Its pathway is amino-acid degradation; L-histidine degradation into L-glutamate; N-formimidoyl-L-glutamate from L-histidine: step 3/3. Its function is as follows. Catalyzes the hydrolytic cleavage of the carbon-nitrogen bond in imidazolone-5-propanoate to yield N-formimidoyl-L-glutamate. It is the third step in the universal histidine degradation pathway. This Pseudomonas paraeruginosa (strain DSM 24068 / PA7) (Pseudomonas aeruginosa (strain PA7)) protein is Imidazolonepropionase.